We begin with the raw amino-acid sequence, 1500 residues long: MTRILTACKVVKTLKSGFGFANVTTKRQWDFSRPGIRLLSVKAKTAHIVLEDGTKMKGYSFGHPSSVAGEVVFNTGLGGYPEALTDPAYKGQILTMANPIIGNGGAPDTTARDELGLNKYMESDGIKVAGLLVLNYSNDYNHWLATKSLGQWLQEEKVPAIYGVDTRMLTKIIRDKGTMLGKIEFEGQSVDFVDPNKQNLIAEVSTKDVKVFGKGNPTKVVAVDCGIKNNVIRLLVKRGAEVHLVPWNHDFTQMEYDGLLIAGGPGNPALAQPLIQNVKKILESDRKEPLFGISTGNIITGLAAGAKSYKMSMANRGQNQPVLNITNRQAFITAQNHGYALDNTLPAGWKPLFVNVNDQTNEGIMHESKPFFAVQFHPEVSPGPTDTEYLFDSFFSLIKKGKGTTITSVLPKPALVASRVEVSKVLILGSGGLSIGQAGEFDYSGSQAVKAMKEENVKTVLMNPNIASVQTNEVGLKQADAVYFLPITPQFVTEVIKAERPDGLILGMGGQTALNCGVELFKRGVLKEYGVKVLGTSVESIMATEDRQLFSDKLNEINEKIAPSFAVESMEDALKAADTIGYPVMIRSAYALGGLGSGICPNKETLIDLGTKAFAMTNQILVERSVTGWKEIEYEVVRDADDNCVTVCNMENVDAMGVHTGDSVVVAPAQTLSNAEFQMLRRTSVNVVRHLGIVGECNIQFALHPTSMEYCIIEVNARLSRSSALASKATGYPLAFIAAKIALGIPLPEIKNVVSGKTSACFEPSLDYMVTKIPRWDLDRFHGTSSRIGSSMKSVGEVMAIGRTFEESFQKALRMCHPSVDGFTPRLPMNKEWPANLDLKKELSEPSSTRIYAIAKALENNMSLDEIVRLTSIDKWFLYKMRDILNMDKTLKGLNSDSVTEETLRKAKEIGFSDKQISKCLGLTEAQTRELRLKKNIHPWVKQIDTLAAEYPSVTNYLYVTYNGQEHDIKFDEHGIMVLGCGPYHIGSSVEFDWCAVSSIRTLRQLGKKTVVVNCNPETVSTDFDECDKLYFEELSLERILDIYHQEACNGCIISVGGQIPNNLAVPLYKNGVKIMGTSPLQIDRAEDRSIFSAVLDELKVAQAPWKAVNTLNEALEFANSVGYPCLLRPSYVLSGSAMNVVFSEDEMKRFLEEATRVSQEHPVVLTKFVEGAREVEMDAVGKEGRVISHAISEHVEDAGVHSGDATLMLPTQTISQGAIEKVKDATRKIAKAFAISGPFNVQFLVKGNDVLVIECNLRASRSFPFVSKTLGVDFIDVATKVMIGESIDEKRLPTLEQPIIPSDYVAIKAPMFSWPRLRDADPILRCEMASTGEVACFGEGIHTAFLKAMLSTGFKIPQKGILIGIQQSFRPRFLGVAEQLHNEGFKLFATEATSDWLNANNVPATPVAWPSQEGQNPSLSSIRKLIRDGSIDLVINLPNNNTKFVHDNYVIRRTAVDSGIALLTNFQVTKLFAEAVQKSRTVDSKSLFHYRQYSAGKAA.

The transit peptide at 1–38 (MTRILTACKVVKTLKSGFGFANVTTKRQWDFSRPGIRL) directs the protein to the mitochondrion. The segment at 39-218 (LSVKAKTAHI…VKVFGKGNPT (180 aa)) is anthranilate phosphoribosyltransferase homolog. 4 positions are modified to N6-acetyllysine; alternate: lysine 44, lysine 55, lysine 57, and lysine 119. 4 positions are modified to N6-succinyllysine; alternate: lysine 44, lysine 55, lysine 57, and lysine 119. An N6-glutaryllysine; alternate modification is found at lysine 55. A Phosphoserine modification is found at serine 148. Residues lysine 157 and lysine 171 each carry the N6-acetyllysine; alternate modification. An N6-succinyllysine; alternate modification is found at lysine 157. Lysine 171 carries the N6-glutaryllysine; alternate modification. The residue at position 176 (lysine 176) is an N6-glutaryllysine. Lysine 182 carries the N6-acetyllysine modification. Serine 189 is modified (phosphoserine). Lysine 197 carries the post-translational modification N6-acetyllysine. Residues lysine 207, lysine 210, lysine 214, lysine 219, and lysine 228 each carry the N6-acetyllysine; alternate modification. Position 207 is an N6-succinyllysine; alternate (lysine 207). Lysine 207, lysine 210, lysine 214, lysine 219, and lysine 228 each carry N6-glutaryllysine; alternate. Lysine 214 bears the N6-succinyllysine; alternate mark. One can recognise a Glutamine amidotransferase type-1 domain in the interval 219 to 404 (KVVAVDCGIK…FSLIKKGKGT (186 aa)). Lysine 237 is subject to N6-glutaryllysine. N6-acetyllysine is present on lysine 279. N6-acetyllysine; alternate occurs at positions 280, 287, 307, and 310. The residue at position 280 (lysine 280) is an N6-glutaryllysine; alternate. N6-succinyllysine; alternate is present on residues lysine 287 and lysine 307. An N6-glutaryllysine; alternate mark is found at lysine 307 and lysine 310. The residue at position 400 (lysine 400) is an N6-succinyllysine. N6-succinyllysine; alternate occurs at positions 402 and 412. 4 positions are modified to N6-glutaryllysine; alternate: lysine 402, lysine 412, lysine 453, and lysine 458. N6-acetyllysine; alternate occurs at positions 412, 453, 458, 522, 527, and 532. An N6-succinyllysine; alternate mark is found at lysine 458, lysine 522, and lysine 527. 2 positions are modified to N6-glutaryllysine; alternate: lysine 527 and lysine 532. Phosphoserine; alternate is present on serine 537. O-linked (GlcNAc) serine; alternate glycosylation occurs at serine 537. A Phosphoserine modification is found at serine 540. Positions 551-743 (SDKLNEINEK…LAFIAAKIAL (193 aa)) constitute an ATP-grasp 1 domain. 2 positions are modified to N6-acetyllysine; alternate: lysine 553 and lysine 560. 2 positions are modified to N6-succinyllysine; alternate: lysine 553 and lysine 560. Lysine 553 carries the post-translational modification N6-glutaryllysine; alternate. Serine 569 bears the Phosphoserine mark. An N6-acetyllysine; alternate mark is found at lysine 575, lysine 603, and lysine 612. An N6-succinyllysine; alternate mark is found at lysine 575, lysine 603, and lysine 612. Lysine 630 carries the post-translational modification N6-acetyllysine. The residue at position 728 (lysine 728) is an N6-glutaryllysine. Residues lysine 751, lysine 757, lysine 772, lysine 793, lysine 811, lysine 831, lysine 840, lysine 841, lysine 856, lysine 875, lysine 889, and lysine 892 each carry the N6-acetyllysine; alternate modification. N6-succinyllysine; alternate is present on residues lysine 751 and lysine 757. 4 positions are modified to N6-glutaryllysine; alternate: lysine 757, lysine 772, lysine 793, and lysine 811. Lysine 793 is subject to N6-succinyllysine; alternate. Residues lysine 831 and lysine 840 each carry the N6-succinyllysine; alternate modification. N6-glutaryllysine; alternate occurs at positions 841, 856, 875, 889, and 892. Residues lysine 875, lysine 889, and lysine 892 each carry the N6-succinyllysine; alternate modification. 2 positions are modified to phosphoserine: serine 896 and serine 898. N6-acetyllysine; alternate is present on residues lysine 908, lysine 915, and lysine 919. Lysine 908, lysine 915, and lysine 919 each carry N6-glutaryllysine; alternate. An N6-succinyllysine; alternate mark is found at lysine 915 and lysine 919. Residue lysine 935 is modified to N6-acetyllysine. Serine 1036 carries the post-translational modification Phosphoserine. Lysine 1074 is subject to N6-acetyllysine; alternate. Residue lysine 1074 is modified to N6-succinyllysine; alternate. Lysine 1074 bears the N6-glutaryllysine; alternate mark. Phosphoserine occurs at positions 1079, 1090, and 1093. One can recognise an ATP-grasp 2 domain in the interval 1093–1284 (SAVLDELKVA…FIDVATKVMI (192 aa)). Lysine 1100 carries the N6-acetyllysine; alternate modification. Lysine 1100 carries the post-translational modification N6-succinyllysine; alternate. Lysine 1149 carries the post-translational modification N6-succinyllysine. N6-acetyllysine; alternate occurs at positions 1168 and 1183. Lysine 1168 and lysine 1183 each carry N6-succinyllysine; alternate. Lysine 1168 and lysine 1183 each carry N6-glutaryllysine; alternate. Serine 1203 is subject to Phosphoserine. Residue lysine 1222 is modified to N6-acetyllysine. Lysine 1224 is modified (N6-glutaryllysine). 3 positions are modified to N6-acetyllysine; alternate: lysine 1232, lysine 1269, and lysine 1291. Lysine 1232, lysine 1269, and lysine 1291 each carry N6-succinyllysine; alternate. A glycan (O-linked (GlcNAc) serine) is linked at serine 1331. An O-linked (GlcNAc) threonine glycan is attached at threonine 1332. The region spanning 1355 to 1500 (FKIPQKGILI…YRQYSAGKAA (146 aa)) is the MGS-like domain. Lysine 1356 is subject to N6-acetyllysine; alternate. Residues lysine 1356 and lysine 1360 each carry the N6-succinyllysine; alternate modification. An N6-glutaryllysine; alternate mark is found at lysine 1356 and lysine 1360. N-acetyl-L-glutamate contacts are provided by threonine 1391, threonine 1394, and tryptophan 1410. A phosphoserine mark is found at serine 1419 and serine 1431. N-acetyl-L-glutamate is bound by residues asparagine 1437 and asparagine 1440. The residue at position 1444 (lysine 1444) is an N6-acetyllysine; alternate. Position 1444 is an N6-succinyllysine; alternate (lysine 1444). Asparagine 1449 contacts N-acetyl-L-glutamate. Residues lysine 1471, lysine 1479, and lysine 1486 each carry the N6-acetyllysine; alternate modification. Residues lysine 1471, lysine 1479, and lysine 1486 each carry the N6-succinyllysine; alternate modification. 2 positions are modified to N6-glutaryllysine; alternate: lysine 1479 and lysine 1486.

As to quaternary structure, can form homooligomers (monomers as predominant form and dimers). (Microbial infection) Interacts with P.berghei (ANKA strain) phospholipid scramblase PLSCR; the interaction is involved in the interaction between parasite sporozoites and host hepatocytes. In terms of processing, undergoes proteolytic cleavage in the C-terminal region corresponding to the loss of approximately 12 AA residues from the C-terminus. Acetylation of Lys-287, Lys-603, Lys-841 and Lys-1291 is observed in liver mitochondria from fasted mice but not from fed mice. Post-translationally, succinylated at Lys-44, Lys-287 and Lys-1291. Desuccinylated at Lys-1291 by SIRT5, leading to activation. In terms of processing, glutarylated. Glutarylation levels increase during fasting. Deglutarylated by SIRT5 at Lys-55, Lys-219, Lys-412, Lys-889, Lys-892, Lys-915, Lys-1360 and Lys-1486, leading to activation. Expressed in hepatocytes (at protein level).

Its subcellular location is the mitochondrion. It localises to the nucleus. It is found in the nucleolus. The protein localises to the cell membrane. It carries out the reaction hydrogencarbonate + NH4(+) + 2 ATP = carbamoyl phosphate + 2 ADP + phosphate + 2 H(+). Its activity is regulated as follows. Requires N-acetyl-L-glutamate (NAG) as an allosteric activator. Its function is as follows. Involved in the urea cycle of ureotelic animals where the enzyme plays an important role in removing excess ammonia from the cell. In Mus musculus (Mouse), this protein is Carbamoyl-phosphate synthase [ammonia], mitochondrial (Cps1).